The chain runs to 396 residues: Elongation factor Tu (396 aa).

Residues 10–206 (KPHCNIGTIG…AVDAYIPQPE (197 aa)) enclose the tr-type G domain. The segment at 19–26 (GHVDHGKT) is G1. Residue 19-26 (GHVDHGKT) coordinates GTP. Residue threonine 26 coordinates Mg(2+). The interval 60 to 64 (GITIS) is G2. The interval 81 to 84 (DCPG) is G3. GTP-binding positions include 81 to 85 (DCPGH) and 136 to 139 (NKCD). The G4 stretch occupies residues 136 to 139 (NKCD). A G5 region spans residues 174 to 176 (SAL).

It belongs to the TRAFAC class translation factor GTPase superfamily. Classic translation factor GTPase family. EF-Tu/EF-1A subfamily. Monomer.

It is found in the cytoplasm. The catalysed reaction is GTP + H2O = GDP + phosphate + H(+). Functionally, GTP hydrolase that promotes the GTP-dependent binding of aminoacyl-tRNA to the A-site of ribosomes during protein biosynthesis. The protein is Elongation factor Tu of Rhodopseudomonas palustris (strain HaA2).